Here is a 98-residue protein sequence, read N- to C-terminus: Putative pterin-4-alpha-carbinolamine dehydratase (98 aa).

The protein belongs to the pterin-4-alpha-carbinolamine dehydratase family.

It carries out the reaction (4aS,6R)-4a-hydroxy-L-erythro-5,6,7,8-tetrahydrobiopterin = (6R)-L-erythro-6,7-dihydrobiopterin + H2O. The polypeptide is Putative pterin-4-alpha-carbinolamine dehydratase (Jannaschia sp. (strain CCS1)).